The sequence spans 306 residues: Ribonuclease Z (306 aa).

Zn(2+)-binding residues include His63, His65, Asp67, His68, His141, Asp211, and His269. The active-site Proton acceptor is the Asp67.

Belongs to the RNase Z family. As to quaternary structure, homodimer. Zn(2+) serves as cofactor.

It carries out the reaction Endonucleolytic cleavage of RNA, removing extra 3' nucleotides from tRNA precursor, generating 3' termini of tRNAs. A 3'-hydroxy group is left at the tRNA terminus and a 5'-phosphoryl group is left at the trailer molecule.. Zinc phosphodiesterase, which displays some tRNA 3'-processing endonuclease activity. Probably involved in tRNA maturation, by removing a 3'-trailer from precursor tRNA. The polypeptide is Ribonuclease Z (Staphylococcus epidermidis (strain ATCC 12228 / FDA PCI 1200)).